A 481-amino-acid chain; its full sequence is MALKALDYDTLNENVKKCQYAVRGELYLRASELQKEGKKIIFTNVGNPHALGQKPLTFPRQVVALCQAPFLLDDPNVGMLFPADAIARAKHYLSLTSGGLGAYSDSRGLPGVRKEVAEFIQRRDGYPSDPELIFLTDGASKGVMQILNCVIRGNGDGILVPVPQYPLYSATISLLGGTLVPYYLDESENWGLDVANLRQSVAQARSQGITVRAMVIINPGNPTGQCLSEANIREILKFCYNEKLVLLGDEVYQQNIYQDERPFISSKKVLMEMGSPFSKEVQLVSFHTVSKGYWGECGQRGGYFEMTNLPPRVVEEIYKVASIALSPNVSAQIFMGLMVNPPKPGDISYDQFARESKGILESLRRRARLMTDGFNSCKNVVCNFTEGAMYSFPQIRLPTGALQAAKQAGKVPDVFYCLKLLEATGISTVPGSGFGQKEGVFHLRTTILPAEDEMPEIMDSFKKFNDEFMTQYDNNFGYSKM.

Lys-291 is modified (N6-(pyridoxal phosphate)lysine). The Peroxisomal targeting signal motif lies at 479–481 (SKM).

This sequence belongs to the class-I pyridoxal-phosphate-dependent aminotransferase family. Alanine aminotransferase subfamily. As to quaternary structure, homodimer. Pyridoxal 5'-phosphate is required as a cofactor. In terms of processing, the N-terminus is blocked. Mostly expressed in leaves, and, to a lower extent, in shoots, stems, flowers, seedlings and green siliques.

The protein resides in the peroxisome. The enzyme catalyses L-alanine + 2-oxoglutarate = pyruvate + L-glutamate. It catalyses the reaction glyoxylate + L-alanine = glycine + pyruvate. The catalysed reaction is glycine + 2-oxoglutarate = glyoxylate + L-glutamate. It functions in the pathway amino-acid biosynthesis; glycine biosynthesis; glycine from glyoxylate: step 1/1. It participates in photosynthesis; C4 acid pathway. The protein operates within amino-acid degradation; L-alanine degradation via transaminase pathway; pyruvate from L-alanine: step 1/1. Its function is as follows. Catalyzes the glutamate:glyoxylate (GGT or GGAT), alanine:glyoxylate (AGT), alanine:2-oxoglutarate (AKT) and glutamate:pyruvate (GPT) aminotransferase reactions in peroxisomes. Required for abscisic acid (ABA)- and stress-mediated responses in an H(2)O(2)-dependent manner. Functions as a photorespiratory aminotransferase that modulates amino acid content during photorespiration (GGAT activity); promotes serine, glycine and citrulline metabolism in response to light. The protein is Glutamate--glyoxylate aminotransferase 1 (GGAT1) of Arabidopsis thaliana (Mouse-ear cress).